Reading from the N-terminus, the 214-residue chain is Holliday junction branch migration complex subunit RuvA (214 aa).

Positions 1–63 (MISFLRGPVA…EDSMTLYGFA (63 aa)) are domain I. The tract at residues 64–139 (DPDEREVFEI…KLVPHGTVNG (76 aa)) is domain II. The flexible linker stretch occupies residues 139 to 143 (GAPAS). A domain III region spans residues 144–214 (PSAQWKPQVV…SAGRQVTARG (71 aa)).

It belongs to the RuvA family. Homotetramer. Forms an RuvA(8)-RuvB(12)-Holliday junction (HJ) complex. HJ DNA is sandwiched between 2 RuvA tetramers; dsDNA enters through RuvA and exits via RuvB. An RuvB hexamer assembles on each DNA strand where it exits the tetramer. Each RuvB hexamer is contacted by two RuvA subunits (via domain III) on 2 adjacent RuvB subunits; this complex drives branch migration. In the full resolvosome a probable DNA-RuvA(4)-RuvB(12)-RuvC(2) complex forms which resolves the HJ.

Its subcellular location is the cytoplasm. In terms of biological role, the RuvA-RuvB-RuvC complex processes Holliday junction (HJ) DNA during genetic recombination and DNA repair, while the RuvA-RuvB complex plays an important role in the rescue of blocked DNA replication forks via replication fork reversal (RFR). RuvA specifically binds to HJ cruciform DNA, conferring on it an open structure. The RuvB hexamer acts as an ATP-dependent pump, pulling dsDNA into and through the RuvAB complex. HJ branch migration allows RuvC to scan DNA until it finds its consensus sequence, where it cleaves and resolves the cruciform DNA. This chain is Holliday junction branch migration complex subunit RuvA, found in Renibacterium salmoninarum (strain ATCC 33209 / DSM 20767 / JCM 11484 / NBRC 15589 / NCIMB 2235).